A 64-amino-acid polypeptide reads, in one-letter code: Large ribosomal subunit protein bL33 (64 aa).

It belongs to the bacterial ribosomal protein bL33 family.

The polypeptide is Large ribosomal subunit protein bL33 (Synechococcus sp. (strain JA-3-3Ab) (Cyanobacteria bacterium Yellowstone A-Prime)).